The chain runs to 642 residues: Threonine--tRNA ligase (642 aa).

Residues 1–61 (MPIITLPDGS…SEDANLEIIT (61 aa)) form the TGS domain. Positions 243 to 534 (DHRKIGKALD…ITEEYAGFFP (292 aa)) are catalytic. Cys-334, His-385, and His-511 together coordinate Zn(2+).

This sequence belongs to the class-II aminoacyl-tRNA synthetase family. Homodimer. Requires Zn(2+) as cofactor.

The protein localises to the cytoplasm. It carries out the reaction tRNA(Thr) + L-threonine + ATP = L-threonyl-tRNA(Thr) + AMP + diphosphate + H(+). Its function is as follows. Catalyzes the attachment of threonine to tRNA(Thr) in a two-step reaction: L-threonine is first activated by ATP to form Thr-AMP and then transferred to the acceptor end of tRNA(Thr). Also edits incorrectly charged L-seryl-tRNA(Thr). This is Threonine--tRNA ligase from Histophilus somni (strain 129Pt) (Haemophilus somnus).